The primary structure comprises 258 residues: Alcohol dehydrogenase 2 (258 aa).

9–33 (IFVGGLGFIGYEACKQLMAKNMASF) contacts NAD(+). A substrate-binding site is contributed by S137. Y150 functions as the Proton acceptor in the catalytic mechanism.

It belongs to the short-chain dehydrogenases/reductases (SDR) family. Homodimer.

It catalyses the reaction a primary alcohol + NAD(+) = an aldehyde + NADH + H(+). The enzyme catalyses a secondary alcohol + NAD(+) = a ketone + NADH + H(+). This is Alcohol dehydrogenase 2 (ADH2) from Ceratitis cosyra (Mango fruit fly).